The primary structure comprises 215 residues: Adenylate kinase (215 aa).

10–15 (GAGKGT) provides a ligand contact to ATP. The NMP stretch occupies residues 30-59 (STGDLLRAAVAAGTPLGKEAKAYMDRGELV). AMP is bound by residues T31, R36, 57-59 (ELV), 85-88 (GFPR), and Q92. The segment at 126–163 (GRRTCKSCGQMYNVYYSPSKVEGKCDKCGGELFQRDDD) is LID. Position 127 (R127) interacts with ATP. Residues C130, C133, C150, and C153 each coordinate Zn(2+). AMP-binding residues include R160 and R171. G199 lines the ATP pocket.

Belongs to the adenylate kinase family. As to quaternary structure, monomer.

The protein resides in the cytoplasm. It catalyses the reaction AMP + ATP = 2 ADP. It functions in the pathway purine metabolism; AMP biosynthesis via salvage pathway; AMP from ADP: step 1/1. Catalyzes the reversible transfer of the terminal phosphate group between ATP and AMP. Plays an important role in cellular energy homeostasis and in adenine nucleotide metabolism. This Thermodesulfovibrio yellowstonii (strain ATCC 51303 / DSM 11347 / YP87) protein is Adenylate kinase.